The primary structure comprises 378 residues: Odorant receptor 33a (378 aa).

Residues 1–33 lie on the Cytoplasmic side of the membrane; it reads MDSRRKVRSENLYKTYWLYWRLLGVEGDYPFRR. A helical transmembrane segment spans residues 34 to 54; it reads LVDFTITSFITILFPVHLILG. Residues 55–62 are Extracellular-facing; it reads MYKKPQIQ. Residues 63-83 form a helical membrane-spanning segment; that stretch reads VFRSLHFTSECLFCSYKFFCF. Topologically, residues 84–127 are cytoplasmic; that stretch reads RWKLKEIKTIEGLLQDLDSRVESEEERNYFNQNPSRVARMLSKS. Residues 128–148 form a helical membrane-spanning segment; the sequence is YLVAAISAIITATVAGLFSTG. Topologically, residues 149–163 are extracellular; sequence RNLMYLGWFPYDFQA. A helical membrane pass occupies residues 164 to 184; that stretch reads TAAIYWISFSYQAIGSSLLIL. The Cytoplasmic portion of the chain corresponds to 185 to 254; it reads ENLANDSYPP…LLRSTLHLSQ (70 aa). Residues 255–275 traverse the membrane as a helical segment; the sequence is LGQFLSSGINISITLINILFF. The Extracellular segment spans residues 276–285; it reads AENNFAMLYY. A helical membrane pass occupies residues 286–306; the sequence is AVFFAAMLIELFPSCYYGILM. Residues 307–355 are Cytoplasmic-facing; sequence TMEFDKLPYAIFSSNWLKMDKRYNRSLIILMQLTLVPVNIKAGGIVGID. The helical transmembrane segment at 356–376 threads the bilayer; the sequence is MSAFFATVRMAYSFYTLALSF. Over 377–378 the chain is Extracellular; the sequence is RV.

It belongs to the insect chemoreceptor superfamily. Heteromeric odorant receptor channel (TC 1.A.69) family. Or2a subfamily. As to quaternary structure, interacts with Orco. Complexes exist early in the endomembrane system in olfactory sensory neurons (OSNs), coupling these complexes to the conserved ciliary trafficking pathway. As to expression, expressed in 1-2 cells on the distal edge of the antenna but not the maxillary palp.

The protein localises to the cell membrane. Its function is as follows. Odorant receptor which mediates acceptance or avoidance behavior, depending on its substrates. The odorant receptor repertoire encodes a large collection of odor stimuli that vary widely in identity, intensity, and duration. May form a complex with Orco to form odorant-sensing units, providing sensitive and prolonged odorant signaling and calcium permeability. The protein is Odorant receptor 33a (Or33a) of Drosophila melanogaster (Fruit fly).